The primary structure comprises 429 residues: Oxysterol-binding protein-like protein OBPalpha (429 aa).

The protein belongs to the OSBP family.

The polypeptide is Oxysterol-binding protein-like protein OBPalpha (OBPALPHA) (Candida albicans (strain SC5314 / ATCC MYA-2876) (Yeast)).